The chain runs to 546 residues: Immunoglobulin heavy constant epsilon (546 aa).

The Extracellular segment spans residues 1 to 499 (ASTQSPSVFP…EAPWTWTGLC (499 aa)). Ig-like domains follow at residues 6 to 103 (PSVF…KTFS), 112 to 210 (PTVK…KKCA), 214 to 318 (PRGV…TKTS), and 324 to 423 (PEVY…RAVS). Intrachain disulfides connect Cys-15-Cys-105, Cys-29-Cys-85, Cys-135-Cys-193, Cys-239-Cys-299, and Cys-345-Cys-405. Residues Asn-21, Asn-49, Asn-99, Asn-146, Asn-252, Asn-264, and Asn-275 are each glycosylated (N-linked (GlcNAc...) asparagine). Residues 500-520 (IFAALFLLSVSYSAAITLLMV) form a helical membrane-spanning segment. Topologically, residues 521–546 (QRFLSATRQGRPQTSLDYTNVLQPHA) are cytoplasmic.

As to quaternary structure, the basic structural unit of both sIgE and mIgE molecules consists of two identical heavy chains and two identical light chains; disulfide-linked. N-terminal variable regions of the heavy and light chains form the antigen binding sites, whereas the C-terminal constant regions of the heavy chains interact with immune receptors to mediate effector functions. Part of IgE antibody. Interacts (via CH3) with the alpha chain/FCE1RA of IgE Fc receptor complex. Interacts (via CH3 region) with FCER2 (via C-type lectin domain); this interaction regulates IgE homeostasis. In terms of assembly, part of IgE B cell antigen receptor complex (BCR). The BCR complex consists of one mIgE molecule responsible for antigen binding, non-covalently associated with CD79A and CD79B signaling chains. As to expression, expressed in B lymphocytes stimulated with IL4 and CD40.

The protein resides in the secreted. Its subcellular location is the cell membrane. Constant region of immunoglobulin heavy chains. Immunoglobulins, also known as antibodies, are membrane-bound or secreted glycoproteins produced by B lymphocytes. In the recognition phase of humoral immunity, the membrane-bound immunoglobulins serve as receptors which, upon binding of a specific antigen, trigger the clonal expansion and differentiation of B lymphocytes into immunoglobulins-secreting plasma cells. Secreted immunoglobulins mediate the effector phase of humoral immunity, which results in the elimination of bound antigens. The antigen binding site is formed by the variable domain of one heavy chain, together with that of its associated light chain. Thus, each immunoglobulin has two antigen binding sites with remarkable affinity for a particular antigen. The variable domains are assembled by a process called V-(D)-J rearrangement and can then be subjected to somatic hypermutations which, after exposure to antigen and selection, allow affinity maturation for a particular antigen. Its function is as follows. Constant region of secreted IgE, also known as the Fc region of IgE antibody. Mediates IgE effector functions on myeloid and lymphoid cells primarily via two Fc receptors, the high-affinity IgE Fc receptor complex/FCER1A:MS4A2:FCGR1A and the low-affinity FCER2 receptor, which upon antigen/allergen cross-linking initiate signaling pathways that lead to immune cell activation and differentiation. Triggers the immediate hypersensitivity response to allergens as a host defense mechanism against helminth parasites, pathogenic bacteria and venom toxicity. When dysregulated, it can elicit harmful life-threatening allergic and anaphylactic reactions. Stimulates the high-affinity IgE Fc receptor complex/FCER1A:MS4A2:FCGR1A on mast cells, basophils and eosinophils leading to secretion of vasoactive amines, lipid mediators and cytokines that contribute to inflammatory response, tissue remodeling and cytotoxicity against microbes. On macrophages, cross-linking of FCER2 by IgE immune complexes induces intracellular killing of parasites through activation of L-Arginine-nitric oxide pathway. Activates macrophages to kill tumor cells via antigen-specific antibody-dependent cytotoxicity (ADCC). Triggers differentiation of quiescent M0 macrophages toward M1 state and reprograms M2 macrophages toward a proinflammatory state with antitumor functions. Stimulates FCER2 on B cells and initiates IgE-dependent antigen uptake and presentation to T cells. Functionally, constant region of membrane-bound IgE (long mIgE), part of the B cell receptor complex (BCR). Upon antigen cross-linking triggers quick BCR signaling, ensuring survival of IgE-switched B cells and differentiation into plasma cells, thus regulating both primary and memory IgE responses. In terms of biological role, constant region of membrane-bound IgE (short mIgE), part of the B cell receptor complex (BCR). Upon antigen cross-linking initiates slower but sustained BCR signaling that negatively regulates mature B cell proliferation. The chain is Immunoglobulin heavy constant epsilon from Homo sapiens (Human).